The chain runs to 149 residues: Putative sugar phosphate isomerase YwlF (149 aa).

Substrate is bound at residue H9. C66 serves as the catalytic Proton acceptor. Residue 67-72 coordinates substrate; sequence GTGIGM. H99 (proton donor) is an active-site residue. Position 133 (R133) interacts with substrate.

Belongs to the LacAB/RpiB family.

The polypeptide is Putative sugar phosphate isomerase YwlF (ywlF) (Bacillus subtilis (strain 168)).